We begin with the raw amino-acid sequence, 996 residues long: Cilia- and flagella-associated protein 251 (996 aa).

WD repeat units follow at residues 73 to 114 (GHCN…PKKT), 118 to 164 (PHPN…EPCL), 168 to 211 (EFDR…KGFN), 219 to 258 (PSLK…EKVD), 282 to 319 (KGSN…IAWF), 399 to 438 (SIVS…SVLS), 445 to 485 (TDKE…WQNS), 494 to 533 (QGKP…FDVN), 547 to 593 (IHHS…YSKQ), 615 to 658 (EQET…FKFC), and 719 to 759 (AHPD…LEQI). The tract at residues 971–996 (DLEGEERDDNIEDQYEDEENEEYDQD) is disordered.

It localises to the cell projection. It is found in the cilium. Functionally, as component of a spoke-associated complex, regulates ciliary mobility by mediating a stable and functional assembly of the radial spoke 3 (RS3). This Tetrahymena thermophila (strain SB210) protein is Cilia- and flagella-associated protein 251.